The sequence spans 921 residues: Leucine--tRNA ligase (921 aa).

The 'HIGH' region signature appears at P80–H90. Residues K667 to S671 carry the 'KMSKS' region motif. K670 contacts ATP.

The protein belongs to the class-I aminoacyl-tRNA synthetase family.

The protein localises to the cytoplasm. It carries out the reaction tRNA(Leu) + L-leucine + ATP = L-leucyl-tRNA(Leu) + AMP + diphosphate. The chain is Leucine--tRNA ligase from Psychrobacter arcticus (strain DSM 17307 / VKM B-2377 / 273-4).